Here is a 689-residue protein sequence, read N- to C-terminus: DNA polymerase epsilon subunit B (689 aa).

A compositionally biased stretch (basic and acidic residues) spans 98–115 (EWSHEHPIQHEENILGRT). Positions 98-155 (EWSHEHPIQHEENILGRTDDDENNSDDEMPIAADSSLQNVSLSSPMRQPTERDEYKQP) are disordered. The span at 116–126 (DDDENNSDDEM) shows a compositional bias: acidic residues. S122 carries the phosphoserine modification. Positions 132–144 (SSLQNVSLSSPMR) are enriched in polar residues. S141 bears the Phosphoserine; by CDC28 mark. Residues 146-155 (PTERDEYKQP) show a composition bias toward basic and acidic residues. S613 is subject to Phosphoserine.

Belongs to the DNA polymerase epsilon subunit B family. As to quaternary structure, DNA polymerase epsilon is a heterotetramer consisting of POL2, DPB2, DPB3 and DPB4. Phosphorylated in a cell cycle dependent manner during late G1 phase. Phosphorylation may facilitate the interaction with POL2 or the activity of DNA polymerase II. Phosphorylation is independent of DNA replication but dependent upon CDC28 in vivo. Both Ser-141 and Ser-613 are phosphorylated in vivo, but in vitro only Ser-141 is phosphorylated by CDC28.

It is found in the cytoplasm. Its subcellular location is the nucleus. As accessory component of the DNA polymerase epsilon complex participates in chromosomal DNA replication. It is required during synthesis of the leading and lagging DNA strands at the replication fork and binds at/or near replication origins and moves along DNA with the replication fork. It has 3'-5' proofreading exonuclease activity that correct errors arising during DNA replication. It is also involved in DNA synthesis during DNA repair. This is DNA polymerase epsilon subunit B (DPB2) from Saccharomyces cerevisiae (strain ATCC 204508 / S288c) (Baker's yeast).